Consider the following 330-residue polypeptide: Short chain dehydrogenase macD (330 aa).

Residues K57, D86, N113, Y204, and K208 each coordinate NADP(+). Residue Y204 is the Proton donor of the active site. Catalysis depends on K208, which acts as the Lowers pKa of active site Tyr.

Belongs to the short-chain dehydrogenases/reductases (SDR) family.

Its pathway is secondary metabolite biosynthesis; terpenoid biosynthesis. Short chain dehydrogenase; part of the gene cluster that mediates the biosynthesis of macrophorins, isoprenoid epoxycyclohexenones containing cyclized drimane moieties. The first step of the pathway is the synthesis of 6-methylsalicylic acid (6-MSA) by the polyketide synthase macA. 6-MSA is then converted to m-cresol by the decarboxylase macB. The cytochrome P450 monooxygenase macC then catalyzes the oxidation of m-cresol to toluquinol. Epoxidation of toluquinol is then performed by the short chain dehydrogenase macD, with the help of macE, and a further prenylation by macG leads to 7-deacetoxyyanuthone A. The next step is the hydroxylation of C-22 of 7-deacetoxyyanuthone A by the cytochrome P450 monooxygenase macH to yield 22-deacetylyanuthone A. O-Mevalon transferase macI then attaches mevalon to the hydroxyl group of 22-deacetylyanuthone A to produce yanuthone E. The terpene cyclase macJ catalyzes the cyclization of 22-deacetylyanuthone A to macrophorin A. MacJ is also able to catalyze cyclization of yanuthone E and 7-deacetoxyyanuthone A to their corresponding macrophorins. The macJ products can be further modified by macH and macJ, as well as by the FAD-dependent monooxygenase macF, to produce additional macrophorins, including 4'-oxomacrophorin A, 4'-oxomacrophorin D and 4'-oxomacrophorin E. This is Short chain dehydrogenase macD from Penicillium terrestre.